The sequence spans 213 residues: MSETAPVAQAASTATEKPAAAKKTKKPAKAAAPRKKPAGPSVSELIVQAVSSSKERSGVSLAALKKSLAAAGYDVEKNNSRIKLGLKSLVNKGTLVQTKGTGAAGSFKLNKKAESKAITTKVSVKAKASGAAKKPKKTAGAAAKKTVKTPKKPKKPAVSKKTSKSPKKPKVVKAKKVAKSPAKAKAVKPKASKAKVTKPKTPAKPKKAAPKKK.

Positions 1-43 (MSETAPVAQAASTATEKPAAAKKTKKPAKAAAPRKKPAGPSVS) are disordered. An N-acetylserine modification is found at S2. Phosphoserine is present on residues S2 and S12. Residues 8-18 (AQAASTATEKP) show a composition bias toward low complexity. At K17 the chain carries N6-acetyllysine. A compositionally biased stretch (basic residues) spans 20-37 (AAKKTKKPAKAAAPRKKP). K36 is modified (N6-(beta-hydroxybutyryl)lysine). One can recognise an H15 domain in the interval 38–111 (AGPSVSELIV…GAAGSFKLNK (74 aa)). S43 bears the Phosphoserine mark. Residue K54 is modified to N6-(beta-hydroxybutyryl)lysine. Residue R56 is modified to Citrulline. The residue at position 66 (K66) is an N6-(beta-hydroxybutyryl)lysine. Position 67 is a phosphoserine (S67). K77 is modified (N6-acetyllysine). K87 is subject to N6-(beta-hydroxybutyryl)lysine. K92 is subject to N6-(beta-hydroxybutyryl)lysine; alternate. K92 carries the N6-acetyllysine; alternate modification. Position 106 is a phosphoserine (S106). Position 108 is an N6-(beta-hydroxybutyryl)lysine (K108). A disordered region spans residues 112–213 (KAESKAITTK…KPKKAAPKKK (102 aa)). The span at 120–144 (TKVSVKAKASGAAKKPKKTAGAAAK) shows a compositional bias: low complexity. K121 bears the N6-acetyllysine mark. 2 stretches are compositionally biased toward basic residues: residues 145 to 178 (KTVK…KKVA) and 185 to 213 (KAVK…PKKK). T201 carries the phosphothreonine modification.

This sequence belongs to the histone H1/H5 family. Interacts with DFFB. H1 histones are progressively phosphorylated during the cell cycle, becoming maximally phosphorylated during late G2 phase and M phase, and being dephosphorylated sharply thereafter. In terms of processing, citrullination at Arg-56 (H1R54ci) by PADI4 takes place within the DNA-binding site of H1 and results in its displacement from chromatin and global chromatin decondensation, thereby promoting pluripotency and stem cell maintenance. Post-translationally, hydroxybutyrylation of histones is induced by starvation. Restricted to thymus, testis and spleen. Present also in lymphocytic and neuronal cells. Increases in testis starting with a low level at day 5 and reaching high concentrations in 20-day old and adult animals.

It localises to the nucleus. The protein localises to the chromosome. Histone H1 protein binds to linker DNA between nucleosomes forming the macromolecular structure known as the chromatin fiber. Histones H1 are necessary for the condensation of nucleosome chains into higher-order structured fibers. Also acts as a regulator of individual gene transcription through chromatin remodeling, nucleosome spacing and DNA methylation. The sequence is that of Histone H1.1 from Mus musculus (Mouse).